A 222-amino-acid polypeptide reads, in one-letter code: Large ribosomal subunit protein uL3 (222 aa).

A disordered region spans residues 129–150 (HNFRGLPDSHGTERKHRSPGSI).

Belongs to the universal ribosomal protein uL3 family. As to quaternary structure, part of the 50S ribosomal subunit. Forms a cluster with proteins L14 and L19.

In terms of biological role, one of the primary rRNA binding proteins, it binds directly near the 3'-end of the 23S rRNA, where it nucleates assembly of the 50S subunit. The chain is Large ribosomal subunit protein uL3 from Acidothermus cellulolyticus (strain ATCC 43068 / DSM 8971 / 11B).